Here is a 279-residue protein sequence, read N- to C-terminus: Putative ABC transporter ATP-binding protein GSU3001 (279 aa).

Residues 1-237 (MRFSVDLKAY…PAEMESVKLR (237 aa)) form the ABC transporter domain. 36–43 (GSNGSGKT) provides a ligand contact to ATP.

The protein belongs to the ABC transporter superfamily.

It localises to the cell inner membrane. Its function is as follows. Probably part of an ABC transporter complex. Responsible for energy coupling to the transport system. This Geobacter sulfurreducens (strain ATCC 51573 / DSM 12127 / PCA) protein is Putative ABC transporter ATP-binding protein GSU3001.